The sequence spans 160 residues: SsrA-binding protein (160 aa).

It belongs to the SmpB family.

The protein localises to the cytoplasm. Functionally, required for rescue of stalled ribosomes mediated by trans-translation. Binds to transfer-messenger RNA (tmRNA), required for stable association of tmRNA with ribosomes. tmRNA and SmpB together mimic tRNA shape, replacing the anticodon stem-loop with SmpB. tmRNA is encoded by the ssrA gene; the 2 termini fold to resemble tRNA(Ala) and it encodes a 'tag peptide', a short internal open reading frame. During trans-translation Ala-aminoacylated tmRNA acts like a tRNA, entering the A-site of stalled ribosomes, displacing the stalled mRNA. The ribosome then switches to translate the ORF on the tmRNA; the nascent peptide is terminated with the 'tag peptide' encoded by the tmRNA and targeted for degradation. The ribosome is freed to recommence translation, which seems to be the essential function of trans-translation. The protein is SsrA-binding protein of Escherichia coli O6:K15:H31 (strain 536 / UPEC).